The following is a 605-amino-acid chain: uncharacterized protein (605 aa).

Residues 56–78 traverse the membrane as a helical segment; sequence ILWSSIAAACVILFAAYKTGAYF.

Its subcellular location is the cell membrane. This is an uncharacterized protein from Bacillus subtilis (strain 168).